The sequence spans 712 residues: Patatin-like phospholipase domain-containing protein ACLA_029670 (712 aa).

The segment covering 1–10 (MTSAEKSATR) has biased composition (polar residues). Residues 1-20 (MTSAEKSATRNIYDPSALPD) are disordered. The chain crosses the membrane as a helical span at residues 85–105 (WPFLFIVFAWITVLGIAYALT). Positions 275 to 466 (LCLSGGATFA…RTDIPIKALN (192 aa)) constitute a PNPLA domain. Residues 306 to 310 (GTSGG) carry the GXSXG motif. Catalysis depends on S308, which acts as the Nucleophile. D453 serves as the catalytic Proton acceptor. Positions 649-664 (FPERHSDYKDESHYTE) are enriched in basic and acidic residues. Positions 649 to 686 (FPERHSDYKDESHYTEVSDSLSTNSSRPHTPDARRGSI) are disordered. Polar residues predominate over residues 665–676 (VSDSLSTNSSRP). Over residues 677–686 (HTPDARRGSI) the composition is skewed to basic and acidic residues.

It belongs to the PLPL family.

It localises to the membrane. Its function is as follows. Probable lipid hydrolase. The sequence is that of Patatin-like phospholipase domain-containing protein ACLA_029670 from Aspergillus clavatus (strain ATCC 1007 / CBS 513.65 / DSM 816 / NCTC 3887 / NRRL 1 / QM 1276 / 107).